We begin with the raw amino-acid sequence, 255 residues long: Hydroxyacylglutathione hydrolase (255 aa).

Zn(2+) contacts are provided by His53, His55, Asp57, His58, His110, Asp127, and His165.

The protein belongs to the metallo-beta-lactamase superfamily. Glyoxalase II family. Monomer. Requires Zn(2+) as cofactor.

It carries out the reaction an S-(2-hydroxyacyl)glutathione + H2O = a 2-hydroxy carboxylate + glutathione + H(+). It participates in secondary metabolite metabolism; methylglyoxal degradation; (R)-lactate from methylglyoxal: step 2/2. Functionally, thiolesterase that catalyzes the hydrolysis of S-D-lactoyl-glutathione to form glutathione and D-lactic acid. The sequence is that of Hydroxyacylglutathione hydrolase from Xanthomonas axonopodis pv. citri (strain 306).